The sequence spans 506 residues: D-alanine--D-alanyl carrier protein ligase (506 aa).

152-153 (TS) provides a ligand contact to ATP. D-alanine is bound at residue aspartate 197. ATP is bound at residue 292–297 (NTYGPT). D-alanine is bound at residue valine 301. Residues aspartate 383, 395–398 (YRGR), and lysine 494 each bind ATP. Lysine 494 is a D-alanine binding site.

Belongs to the ATP-dependent AMP-binding enzyme family. DltA subfamily.

Its subcellular location is the cytoplasm. It catalyses the reaction holo-[D-alanyl-carrier protein] + D-alanine + ATP = D-alanyl-[D-alanyl-carrier protein] + AMP + diphosphate. It participates in cell wall biogenesis; lipoteichoic acid biosynthesis. In terms of biological role, catalyzes the first step in the D-alanylation of lipoteichoic acid (LTA), the activation of D-alanine and its transfer onto the D-alanyl carrier protein (Dcp) DltC. In an ATP-dependent two-step reaction, forms a high energy D-alanyl-AMP intermediate, followed by transfer of the D-alanyl residue as a thiol ester to the phosphopantheinyl prosthetic group of the Dcp. D-alanylation of LTA plays an important role in modulating the properties of the cell wall in Gram-positive bacteria, influencing the net charge of the cell wall. This is D-alanine--D-alanyl carrier protein ligase from Lacticaseibacillus rhamnosus (Lactobacillus rhamnosus).